Here is a 173-residue protein sequence, read N- to C-terminus: Photosystem I assembly protein Ycf3 (173 aa).

TPR repeat units lie at residues 35–68, 72–105, and 120–153; these read AFSYYRDGMSAQAEGEYAEALQNYYEAMRLEIDP, SYILYNIGLIHTSNGEHGKALEYYYQAIERNPSL, and GEQAIEEGNIATSEILFNQAASYWKQAIRLAPNS.

This sequence belongs to the Ycf3 family.

It is found in the plastid. The protein resides in the chloroplast thylakoid membrane. Functionally, essential for the assembly of the photosystem I (PSI) complex. May act as a chaperone-like factor to guide the assembly of the PSI subunits. The protein is Photosystem I assembly protein Ycf3 of Mesostigma viride (Green alga).